A 72-amino-acid chain; its full sequence is Toxin Cll8 (72 aa).

The signal sequence occupies residues 1–4 (TVSA). One can recognise an LCN-type CS-alpha/beta domain in the interval 5–70 (KEGYLVKKSN…TWPLPNKSCG (66 aa)). 4 disulfide bridges follow: Cys-16/Cys-69, Cys-20/Cys-45, Cys-29/Cys-50, and Cys-33/Cys-52. A Cysteine amide modification is found at Cys-69.

The protein belongs to the long (4 C-C) scorpion toxin superfamily. Sodium channel inhibitor family. Beta subfamily. As to expression, expressed by the venom gland.

It localises to the secreted. Its function is as follows. Beta toxins bind voltage-independently at site-4 of sodium channels (Nav) and shift the voltage of activation toward more negative potentials thereby affecting sodium channel activation and promoting spontaneous and repetitive firing. In Centruroides limpidus (Mexican scorpion), this protein is Toxin Cll8.